The following is a 183-amino-acid chain: uncharacterized protein (183 aa).

The chain crosses the membrane as a helical span at residues 7–23; the sequence is LFFTALCFGLTGCIAPP.

The protein localises to the membrane. This is an uncharacterized protein from Haemophilus influenzae (strain ATCC 51907 / DSM 11121 / KW20 / Rd).